The chain runs to 1244 residues: Mitotic chromosome and X-chromosome-associated protein mix-1 (1244 aa).

32–39 (GYNGSGKS) provides a ligand contact to ATP. A coiled-coil region spans residues 247-355 (VKKSAKEIED…AKRKEHEDSK (109 aa)). Residues 337-355 (LSKDREVLDAKRKEHEDSK) are compositionally biased toward basic and acidic residues. The segment at 337–369 (LSKDREVLDAKRKEHEDSKAANSKDIQSQSDDE) is disordered. Polar residues predominate over residues 356-365 (AANSKDIQSQ). The stretch at 415 to 472 (ITAAKKRGERLHNQIKHLEGEKATLSARSKSDIGSADNYQKEVDEINKQLQLLGFNID) forms a coiled coil. The 129-residue stretch at 526-654 (DVFGYVAHLI…DSLDVAREIA (129 aa)) folds into the SMC hinge domain. Coiled coils occupy residues 701-946 (PQIE…RKEA) and 975-1037 (YTVS…IATL). Positions 919-932 (AKTKSKREEKEKEL) are enriched in basic and acidic residues. The segment at 919-943 (AKTKSKREEKEKELTSLQQSEASNR) is disordered. Basic and acidic residues predominate over residues 1216–1232 (DAAAKKGAQKNDKEPPK). The segment at 1216–1244 (DAAAKKGAQKNDKEPPKKKPIVVDDDDFE) is disordered.

This sequence belongs to the SMC family. SMC2 subfamily. Component of the condensin I complex, which contains the mix-1/SMC2 and smc-4/SMC4 heterodimer, and three non SMC subunits that probably regulate the complex: dpy-26, capg-1 and dpy-28. Within the complex, interacts with smc-4, dpy-26, dpy-28 and capg-1. Interaction with smc-4 is required for mitotic chromosome localization. Component of the condensin II complex, which contains the mix-1/SMC2 and smc-4/SMC4 heterodimer, and three non SMC subunits, capg-2, kle-2 and hcp-6 that probably regulate the complex. Within the complex, interacts with smc-4, capg-2, kle-2 and hcp-6. Also a component of the condensin-like dosage compensation complex, which contains the mix-1/SMC2 and dpy-27/SMC4 heterodimer, and three non SMC subunits that probably regulate the complex: dpy-26, capg-1 and dpy-28. Within the complex, interacts with dpy-27, dpy-26, capg-1 and dpy-28. Requires capg-1 for hermaphrodite X chromosome localization. Interacts with smcl-1. As to expression, expressed in embryos and in adult somatic and germline tissues (at protein level).

The protein resides in the nucleus. Its subcellular location is the chromosome. Its function is as follows. Essential protein required for both chromosome condensation and segregation and X-chromosome dosage compensation depending on its binding partners. Central component of the condensin I complex, a complex required for conversion of interphase chromatin into mitotic-like condense chromosomes. The condensin complex introduces positive supercoils into relaxed DNA in the presence of type I topoisomerases. Converts nicked DNA into positive knotted forms in the presence of type II topoisomerases. Central component of the condensin II complex, a complex that seems to play a role in prophase chromosome condensation and organization. Both the condensin complex I and II play a role in meiotic and mitotic chromosome segregation. Plays a role in robust cytokinesis upon the presence of chromatin obstructions. Also a member of the condensin I-like dosage compensation complex that associates specifically with hermaphrodite X chromosomes to reduce their gene transcription during interphase. The protein is Mitotic chromosome and X-chromosome-associated protein mix-1 (mix-1) of Caenorhabditis elegans.